Reading from the N-terminus, the 119-residue chain is Large ribosomal subunit protein bL20 (119 aa).

This sequence belongs to the bacterial ribosomal protein bL20 family.

Binds directly to 23S ribosomal RNA and is necessary for the in vitro assembly process of the 50S ribosomal subunit. It is not involved in the protein synthesizing functions of that subunit. The sequence is that of Large ribosomal subunit protein bL20 from Nitrosococcus oceani (strain ATCC 19707 / BCRC 17464 / JCM 30415 / NCIMB 11848 / C-107).